We begin with the raw amino-acid sequence, 564 residues long: Poly(U)-binding-splicing factor PUF60 (564 aa).

An inhibits homodimerization region spans residues 1 to 521 (MATATIALQV…EDAEIIVKIF (521 aa)). A disordered region spans residues 37–61 (KWKPPQGTESIKMENGQSTGTKLGL). Lys-48 participates in a covalent cross-link: Glycyl lysine isopeptide (Lys-Gly) (interchain with G-Cter in SUMO2). The residue at position 65 (Thr-65) is a Phosphothreonine. Residues 82–564 (QSIKSVLVKQ…ERFDNSDLSA (483 aa)) are inhibits transcriptional repression, interaction with ERCC3 and apoptosis induction. Lys-85 is covalently cross-linked (Glycyl lysine isopeptide (Lys-Gly) (interchain with G-Cter in SUMO2)). Ser-117 is modified (phosphoserine). 2 RRM domains span residues 134–212 (CRVY…RPSN) and 231–309 (NRIY…KAVT). Phosphoserine is present on Ser-249. Lys-256 is subject to N6-acetyllysine. At Thr-319 the chain carries Phosphothreonine. A disordered region spans residues 421 to 442 (KKEKEEEELFPESERPEMLSEQ). Residue Lys-424 forms a Glycyl lysine isopeptide (Lys-Gly) (interchain with G-Cter in SUMO2) linkage. Over residues 432–442 (ESERPEMLSEQ) the composition is skewed to basic and acidic residues. Lys-459 is modified (N6-acetyllysine). Residue Lys-463 forms a Glycyl lysine isopeptide (Lys-Gly) (interchain with G-Cter in SUMO2) linkage. The RRM 3; atypical domain maps to 467–554 (TVMVLRNMVD…RKVVAEVYDQ (88 aa)).

Belongs to the RRM half pint family. In terms of assembly, homodimer. Associates with the spliceosome. Found in a complex with RO60 and Y5 RNA. Found in a complex with FUBP1 and far upstream element (FUSE) DNA segment. Interacts directly with ERCC3. Interacts with CDK7 and GTF2H1. Interacts with SRSF11/P54. Interacts with ARGLU1; interaction may be involved in ARGLU1-mediated modulation of alternative splicing.

The protein resides in the nucleus. Its function is as follows. DNA- and RNA-binding protein, involved in several nuclear processes such as pre-mRNA splicing, apoptosis and transcription regulation. In association with FUBP1 regulates MYC transcription at the P2 promoter through the core-TFIIH basal transcription factor. Acts as a transcriptional repressor through the core-TFIIH basal transcription factor. Represses FUBP1-induced transcriptional activation but not basal transcription. Decreases ERCC3 helicase activity. Is also involved in pre-mRNA splicing. Promotes splicing of an intron with weak 3'-splice site and pyrimidine tract in a cooperative manner with U2AF2. Involved in apoptosis induction when overexpressed in HeLa cells. Modulates alternative splicing of several mRNAs. Binds to relaxed DNA of active promoter regions. Binds to the pyrimidine tract and 3'-splice site regions of pre-mRNA; binding is enhanced in presence of U2AF2. Binds to Y5 RNA in association with RO60. Binds to poly(U) RNA. This chain is Poly(U)-binding-splicing factor PUF60, found in Rattus norvegicus (Rat).